Consider the following 649-residue polypeptide: 1,4-alpha-glucan branching enzyme GlgB (649 aa).

D315 functions as the Nucleophile in the catalytic mechanism. E366 (proton donor) is an active-site residue.

It belongs to the glycosyl hydrolase 13 family. GlgB subfamily. As to quaternary structure, monomer.

It carries out the reaction Transfers a segment of a (1-&gt;4)-alpha-D-glucan chain to a primary hydroxy group in a similar glucan chain.. It functions in the pathway glycan biosynthesis; glycogen biosynthesis. Catalyzes the formation of the alpha-1,6-glucosidic linkages in glycogen by scission of a 1,4-alpha-linked oligosaccharide from growing alpha-1,4-glucan chains and the subsequent attachment of the oligosaccharide to the alpha-1,6 position. The chain is 1,4-alpha-glucan branching enzyme GlgB from Ligilactobacillus salivarius (strain UCC118) (Lactobacillus salivarius).